Reading from the N-terminus, the 188-residue chain is Putative manganese efflux pump MntP (188 aa).

6 helical membrane-spanning segments follow: residues 3–23 (MITL…VALG), 39–59 (LGWH…LAGL), 65–85 (IETY…GKMI), 104–124 (GMSL…VGLS), 125–145 (LAIV…IAGV), and 167–187 (IAGG…HTLG).

Belongs to the MntP (TC 9.B.29) family.

Its subcellular location is the cell inner membrane. Functionally, probably functions as a manganese efflux pump. In Syntrophotalea carbinolica (strain DSM 2380 / NBRC 103641 / GraBd1) (Pelobacter carbinolicus), this protein is Putative manganese efflux pump MntP.